We begin with the raw amino-acid sequence, 458 residues long: Homogentisate 1,2-dioxygenase (458 aa).

The active-site Proton acceptor is the His308. Fe cation contacts are provided by His351 and Glu357. Residues Tyr366 and His387 each coordinate homogentisate. His387 lines the Fe cation pocket.

This sequence belongs to the homogentisate dioxygenase family. As to quaternary structure, hexamer; dimer of trimers. Requires Fe cation as cofactor.

The catalysed reaction is homogentisate + O2 = 4-maleylacetoacetate + H(+). Its pathway is amino-acid degradation; L-phenylalanine degradation; acetoacetate and fumarate from L-phenylalanine: step 4/6. Functionally, involved in the catabolism of homogentisate (2,5-dihydroxyphenylacetate or 2,5-OH-PhAc), a central intermediate in the degradation of phenylalanine and tyrosine. Catalyzes the oxidative ring cleavage of the aromatic ring of homogentisate to yield maleylacetoacetate. This Xanthomonas axonopodis pv. citri (strain 306) protein is Homogentisate 1,2-dioxygenase.